A 473-amino-acid chain; its full sequence is Photosystem II CP43 reaction center protein (473 aa).

Residues M1–E14 constitute a propeptide that is removed on maturation. T15 carries the post-translational modification N-acetylthreonine. The residue at position 15 (T15) is a Phosphothreonine. Transmembrane regions (helical) follow at residues L69–A93, L134–N155, K178–T200, K255–S275, and W291–A312. E367 lines the [CaMn4O5] cluster pocket. A helical membrane pass occupies residues R447–P471.

This sequence belongs to the PsbB/PsbC family. PsbC subfamily. PSII is composed of 1 copy each of membrane proteins PsbA, PsbB, PsbC, PsbD, PsbE, PsbF, PsbH, PsbI, PsbJ, PsbK, PsbL, PsbM, PsbT, PsbX, PsbY, PsbZ, Psb30/Ycf12, at least 3 peripheral proteins of the oxygen-evolving complex and a large number of cofactors. It forms dimeric complexes. Requires Binds multiple chlorophylls and provides some of the ligands for the Ca-4Mn-5O cluster of the oxygen-evolving complex. It may also provide a ligand for a Cl- that is required for oxygen evolution. PSII binds additional chlorophylls, carotenoids and specific lipids. as cofactor.

The protein resides in the plastid. It is found in the chloroplast thylakoid membrane. Its function is as follows. One of the components of the core complex of photosystem II (PSII). It binds chlorophyll and helps catalyze the primary light-induced photochemical processes of PSII. PSII is a light-driven water:plastoquinone oxidoreductase, using light energy to abstract electrons from H(2)O, generating O(2) and a proton gradient subsequently used for ATP formation. This is Photosystem II CP43 reaction center protein from Nicotiana tabacum (Common tobacco).